A 458-amino-acid chain; its full sequence is Argininosuccinate lyase (458 aa).

It belongs to the lyase 1 family. Argininosuccinate lyase subfamily.

The protein localises to the cytoplasm. It carries out the reaction 2-(N(omega)-L-arginino)succinate = fumarate + L-arginine. The protein operates within amino-acid biosynthesis; L-arginine biosynthesis; L-arginine from L-ornithine and carbamoyl phosphate: step 3/3. The sequence is that of Argininosuccinate lyase from Salmonella newport (strain SL254).